The primary structure comprises 235 residues: Serine protease SplA (235 aa).

The signal sequence occupies residues 1 to 35; the sequence is MNENVMVKGLTALTILTSLGFAENISNQPHSIAKA. Catalysis depends on charge relay system residues His-74, Asp-113, and Ser-189.

The protein belongs to the peptidase S1B family.

Its subcellular location is the secreted. In Staphylococcus aureus (strain MSSA476), this protein is Serine protease SplA (splA).